Reading from the N-terminus, the 99-residue chain is Nucleoid-associated protein EbfC (99 aa).

This sequence belongs to the YbaB/EbfC family. As to quaternary structure, homodimer. Can form tetramers and octamers in solution.

The protein localises to the cytoplasm. It localises to the nucleoid. Its function is as follows. Binds to DNA and alters its conformation. May be involved in global regulation of gene expression. Binds specifically and non-specifically to DNA, preferentially to the 4 bp broken palindrome 5'-GTnAC-3'. Affects expression of a wide variety of genes, encoding both structural and metabolic proteins. This Borreliella burgdorferi (strain ATCC 35210 / DSM 4680 / CIP 102532 / B31) (Borrelia burgdorferi) protein is Nucleoid-associated protein EbfC.